A 221-amino-acid polypeptide reads, in one-letter code: 2-amino-5-formylamino-6-ribosylaminopyrimidin-4(3H)-one 5'-monophosphate deformylase (221 aa).

Fe cation-binding residues include E29, H31, D40, and H108.

The protein belongs to the creatininase superfamily. FAPy deformylase family. In terms of assembly, homodimer. Fe(2+) serves as cofactor. Requires Zn(2+) as cofactor.

It carries out the reaction 2-amino-5-formylamino-6-(5-phospho-D-ribosylamino)pyrimidin-4(3H)-one + H2O = 2,5-diamino-6-(1-D-ribosylamino)pyrimidin-4(3H)-one 5'-phosphate + formate + H(+). It functions in the pathway cofactor biosynthesis; coenzyme F420 biosynthesis. It participates in cofactor biosynthesis; riboflavin biosynthesis. Its function is as follows. Catalyzes the hydrolysis of the formamide of 2-amino-5-formylamino-6-ribosylamino-4(3H)-pyrimidinone 5'-monophosphate (FAPy) to form 2,5-diamino-6-ribosylamino-4(3H)-pyrimidinone 5'-phosphate (APy). This chain is 2-amino-5-formylamino-6-ribosylaminopyrimidin-4(3H)-one 5'-monophosphate deformylase, found in Methanococcus maripaludis (strain C7 / ATCC BAA-1331).